The primary structure comprises 1209 residues: Calcium-activated potassium channel subunit alpha-1 (1209 aa).

A compositionally biased stretch (gly residues) spans 1–23; the sequence is MANGGGGGGGSSGGGGGGGGGSG. Positions 1-61 are disordered; it reads MANGGGGGGG…SSSSSSSSSV (61 aa). Over 1–86 the chain is Extracellular; sequence MANGGGGGGG…VPCDSRGQRM (86 aa). The segment covering 25 to 39 has biased composition (polar residues); sequence RMSSNIHANNLSLDA. Residues 40-60 show a composition bias toward low complexity; sequence SSSSSSSSSSSSSSSSSSSSS. Residues 87 to 107 form a helical membrane-spanning segment; the sequence is WWAFLASSMVTFFGGLFIILL. Over 108–178 the chain is Cytoplasmic; the sequence is WRTLKYLWTV…MISAQTLTGR (71 aa). S-palmitoyl cysteine attachment occurs at residues Cys-118, Cys-119, and Cys-121. A helical transmembrane segment spans residues 179-199; it reads VLVVLVFALSIGALVIYFIDS. Topologically, residues 200 to 214 are extracellular; it reads SNPIESCQNFYKDFT. The chain crosses the membrane as a helical span at residues 215-235; sequence LQIDMAFNVFFLLYFGLRFIA. The Cytoplasmic portion of the chain corresponds to 236–239; the sequence is ANDK. Residues 240 to 260 form a helical membrane-spanning segment; it reads LWFWLEVNSVVDFFTVPPVFV. Over 261–264 the chain is Extracellular; the sequence is SVYL. Residues 265-285 traverse the membrane as a helical; Voltage-sensor segment; sequence NRSWLGLRFLRALRLIQFSEI. Topologically, residues 286-300 are cytoplasmic; that stretch reads LQFLNILKTSNSIKL. A helical membrane pass occupies residues 301–321; the sequence is VNLLSIFISTWLTAAGFIHLV. The Extracellular segment spans residues 322–335; that stretch reads ENSGDPWENFQNNQ. Residues 336-358 constitute an intramembrane region (pore-forming); it reads ALTYWECVYLLMVTMSTVGYGDV. A Selectivity for potassium motif is present at residues 352 to 355; it reads TVGY. Residues 359 to 367 lie on the Extracellular side of the membrane; the sequence is YAKTTLGRL. A helical membrane pass occupies residues 368 to 388; the sequence is FMVFFILGGLAMFASYVPEII. Residues 389–1209 are Cytoplasmic-facing; the sequence is ELIGNRKKYG…KQNRKEMVYR (821 aa). An RCK N-terminal 1 domain is found at 407-549; it reads RKHIVVCGHI…WNWKEGDDAI (143 aa). Residues Glu-439, Gln-462, and Glu-464 each contribute to the Mg(2+) site. Residues 556–576 are segment S7; that stretch reads LGFIAQSCLAQGLSTMLANLF. A segment S8 region spans residues 613 to 633; sequence LSFPTVCELCFVKLKLLMIAI. Asp-670 is modified (phosphothreonine). A Phosphoserine modification is found at Lys-672. Residues 681–685 form a heme-binding motif region; the sequence is CKACH. The tract at residues 703–733 is disordered; sequence EDEQPPTLSPKKKQRNGGMRNSPNTSPKLMR. A Phosphothreonine modification is found at Thr-709. 3 positions are modified to phosphoserine: Ser-711, Ser-724, and Ser-728. The tract at residues 783-803 is segment S9; the sequence is VLSGHVVVCIFGDVSSALIGL. In terms of domain architecture, RCK N-terminal 2 spans 785–929; the sequence is SGHVVVCIFG…MDRSSPDNSP (145 aa). Thr-916 is subject to Phosphothreonine. Phosphoserine is present on residues Ser-924 and Ser-928. The Calcium bowl motif lies at 976-998; the sequence is TELVNDTNVQFLDQDDDDDPDTE. The Ca(2+) site is built by Gln-985, Asp-988, Asp-991, and Asp-993. A segment S10 region spans residues 1005 to 1025; that stretch reads FACGTAFAVSVLDSLMSATYF. Low complexity predominate over residues 1159–1184; sequence RASLSHSSHSSQSSSKKSSSVHSIPS. A disordered region spans residues 1159–1209; that stretch reads RASLSHSSHSSQSSSKKSSSVHSIPSTANRPNRPKSRESRDKQNRKEMVYR. The span at 1193–1209 shows a compositional bias: basic and acidic residues; that stretch reads KSRESRDKQNRKEMVYR. Phosphoserine is present on residues Ser-1194 and Ser-1197.

This sequence belongs to the potassium channel family. Calcium-activated (TC 1.A.1.3) subfamily. KCa1.1/KCNMA1 sub-subfamily. Homotetramer; which constitutes the calcium-activated potassium channel. Interacts with beta subunits KCNMB1, KCNMB2, KCNMB3 and KCNMB4. Interacts with gamma subunits LRRC26, LRRC38, LRRC52 and LRRC55. Beta and gamma subunits are accessory, and modulate its activity. Interacts with RAB11B. Post-translationally, phosphorylated. Phosphorylation by kinases such as PKA and/or PKG. In smooth muscles, phosphorylation affects its activity. Palmitoylation by ZDHHC22 and ZDHHC23 within the intracellular linker between the S0 and S1 transmembrane domains regulates localization to the plasma membrane. Depalmitoylated by LYPLA1 and LYPLAL1, leading to retard exit from the trans-Golgi network.

It is found in the cell membrane. The catalysed reaction is K(+)(in) = K(+)(out). Its activity is regulated as follows. Ethanol and carbon monoxide-bound heme increase channel activation. Heme inhibits channel activation. In terms of biological role, potassium channel activated by both membrane depolarization or increase in cytosolic Ca(2+) that mediates export of K(+). It is also activated by the concentration of cytosolic Mg(2+). Its activation dampens the excitatory events that elevate the cytosolic Ca(2+) concentration and/or depolarize the cell membrane. It therefore contributes to repolarization of the membrane potential. Plays a key role in controlling excitability in a number of systems, such as regulation of the contraction of smooth muscle, the tuning of hair cells in the cochlea, regulation of transmitter release, and innate immunity. In smooth muscles, its activation by high level of Ca(2+), caused by ryanodine receptors in the sarcoplasmic reticulum, regulates the membrane potential. In cochlea cells, its number and kinetic properties partly determine the characteristic frequency of each hair cell and thereby helps to establish a tonotopic map. Kinetics of KCNMA1 channels are determined by alternative splicing, phosphorylation status and its combination with modulating beta subunits. Highly sensitive to both iberiotoxin (IbTx) and charybdotoxin (CTX). Functionally, potassium channel activated by both membrane depolarization or increase in cytosolic Ca(2+) that mediates export of K(+). In Mus musculus (Mouse), this protein is Calcium-activated potassium channel subunit alpha-1 (Kcnma1).